Here is a 215-residue protein sequence, read N- to C-terminus: NAD(P)H-hydrate epimerase (215 aa).

The 205-residue stretch at 8–212 (MYNIENKGHD…KIGIPPEAEE (205 aa)) folds into the YjeF N-terminal domain. Residue 57–61 (NNGGD) coordinates (6S)-NADPHX. K(+) is bound by residues asparagine 58 and aspartate 124. Residues 128–134 (GTGISGE), tyrosine 139, and aspartate 157 contribute to the (6S)-NADPHX site. Serine 160 lines the K(+) pocket.

This sequence belongs to the NnrE/AIBP family. It depends on K(+) as a cofactor.

The catalysed reaction is (6R)-NADHX = (6S)-NADHX. It carries out the reaction (6R)-NADPHX = (6S)-NADPHX. In terms of biological role, catalyzes the epimerization of the S- and R-forms of NAD(P)HX, a damaged form of NAD(P)H that is a result of enzymatic or heat-dependent hydration. This is a prerequisite for the S-specific NAD(P)H-hydrate dehydratase to allow the repair of both epimers of NAD(P)HX. This is NAD(P)H-hydrate epimerase from Nitrosopumilus maritimus (strain SCM1).